Consider the following 281-residue polypeptide: GPN-loop GTPase 3 (281 aa).

13–18 (GSGKST) is a GTP binding site. The Gly-Pro-Asn (GPN)-loop; involved in dimer interface signature appears at 70–72 (GPN). GTP is bound at residue 173–176 (SKMD). Positions 259 to 281 (VQYGEDEEPKEPKDMDEGDFTAQ) are disordered.

Belongs to the GPN-loop GTPase family. Heterodimers with GPN1 or GPN2. Binds to RNA polymerase II (RNAPII).

Functionally, small GTPase required for proper nuclear import of RNA polymerase II and III (RNAPII and RNAPIII). May act at an RNAP assembly step prior to nuclear import. The polypeptide is GPN-loop GTPase 3 (Mycosarcoma maydis (Corn smut fungus)).